A 338-amino-acid chain; its full sequence is MFSELLKKIVSGQDLAEDETTTMMDAIMSGEVEVPAIAAFMAALATKGETFTELAGAARSMRRKATRIQVSSNTVVDTCGTGGDGASTFNISTTSAFVVAGCGVTVAKHGNRSVSSKCGSADVLEALGVKLDTHPEVVEQGIEEIGIGFLFAPMYHSAMRFAMPARQAVGIRSIFNMLGPLTNPAGANCQLLGVYDPKLTEMFAEALKLLGARKAYVVHGHDGLDEISICAPTRVSELAEGMVRTFDILPEQLNIEACDISELAGGDAEENAGITKSILEGTPGPKQDVVVVNAGAALVAAGVAEDFKDGMAKAKEAIQSGAALGKLEALVKFTQENG.

Residues G80, 83-84 (GD), T88, 90-93 (NIST), 108-116 (KHGNRSVSS), and S120 each bind 5-phospho-alpha-D-ribose 1-diphosphate. Position 80 (G80) interacts with anthranilate. S92 lines the Mg(2+) pocket. N111 contacts anthranilate. R166 serves as a coordination point for anthranilate. The Mg(2+) site is built by D225 and E226.

It belongs to the anthranilate phosphoribosyltransferase family. As to quaternary structure, homodimer. Mg(2+) is required as a cofactor.

It catalyses the reaction N-(5-phospho-beta-D-ribosyl)anthranilate + diphosphate = 5-phospho-alpha-D-ribose 1-diphosphate + anthranilate. It functions in the pathway amino-acid biosynthesis; L-tryptophan biosynthesis; L-tryptophan from chorismate: step 2/5. In terms of biological role, catalyzes the transfer of the phosphoribosyl group of 5-phosphorylribose-1-pyrophosphate (PRPP) to anthranilate to yield N-(5'-phosphoribosyl)-anthranilate (PRA). This is Anthranilate phosphoribosyltransferase from Desulfatibacillum aliphaticivorans.